The chain runs to 182 residues: Envelope glycoprotein L (182 aa).

A signal peptide spans 1–39 (MRRSAARGRAVSSTQTAMGAGAAIAVWAAALIALYSSCA). The gL alphaherpesvirus-type domain occupies 52–182 (ANASDTIGRL…RPEKTAPGGV (131 aa)). A disulfide bridge links Cys73 with Cys109.

This sequence belongs to the herpesviridae glycoprotein L (gL) family. Alphaherpesvirinae gL subfamily. As to quaternary structure, interacts with glycoprotein H (gH); this interaction is necessary for the correct processing and cell surface expression of gH. The heterodimer gH/gL seems to interact with gB trimers during fusion. O-glycosylated, and sialylated.

It localises to the virion membrane. The protein resides in the host cell membrane. The protein localises to the host Golgi apparatus. It is found in the host trans-Golgi network. Its function is as follows. The heterodimer glycoprotein H-glycoprotein L is required for the fusion of viral and plasma membranes leading to virus entry into the host cell. Acts as a functional inhibitor of gH and maintains gH in an inhibited form. Upon binding to host integrins, gL dissociates from gH leading to activation of the viral fusion glycoproteins gB and gH. This chain is Envelope glycoprotein L, found in Amazona oratrix (yellow-headed parrot).